The chain runs to 683 residues: Cytochrome P450 monooxygenase htyF (683 aa).

A helical transmembrane segment spans residues proline 8–leucine 28. Asparagine 29 is a glycosylation site (N-linked (GlcNAc...) asparagine). A heme-binding site is contributed by cysteine 481. An N-linked (GlcNAc...) asparagine glycan is attached at asparagine 581. A helical membrane pass occupies residues leucine 588 to tyrosine 608.

It belongs to the cytochrome P450 family. It depends on heme as a cofactor.

The protein localises to the membrane. It participates in antifungal biosynthesis. In terms of biological role, cytochrome P450 monooxygenase; part of the gene cluster that mediates the de novo generation of L-homotyrosine from acetyl-CoA and 4-hydroxyphenyl-pyruvate. L-homotyrosine is a building block of echinocandin B, a fungal lipidated cyclic hexapeptide that acts as an antifungal agent. L-homotyrosine 4-hydroxyphenyl-pyruvate first undergoes an aldol-type condensation by htyA with the C-2 of acetyl-CoA followed by the release of CoA to form 2-(4-hydroxybenzyl)-malate. This is followed by isomerization of 2-(4-hydroxy-benzyl)-malate to 3-(4-hydroxybenzyl)-malate by htyD. Thereafter, 3-(4-hydroxybenzyl)-malate undergoes decarboxylation and oxidation to form 2-oxo-4-(4-hydroxybenzyl)butanoic acid, coupled to reduction of NAD(+) to NADH by htyC. The product then undergoes transamination catalyzed by htyB to form L-homotyrosine. This chain is Cytochrome P450 monooxygenase htyF, found in Aspergillus rugulosus (Emericella rugulosa).